A 43-amino-acid polypeptide reads, in one-letter code: Holotricin-1 (43 aa).

3 cysteine pairs are disulfide-bonded: Cys3–Cys34, Cys20–Cys39, and Cys24–Cys41.

It belongs to the invertebrate defensin family. Type 1 subfamily. Hemolymph.

It is found in the secreted. Shows potent antibacterial activity against Gram-positive bacteria. In Holotrichia diomphalia (Korean black chafer), this protein is Holotricin-1.